The chain runs to 456 residues: GTP cyclohydrolase 1 (456 aa).

Residues Cys-340, His-343, and Cys-412 each coordinate Zn(2+).

Belongs to the GTP cyclohydrolase I family. In terms of assembly, homodimer. In terms of tissue distribution, expressed in leaves and unripe fruits.

It carries out the reaction GTP + H2O = 7,8-dihydroneopterin 3'-triphosphate + formate + H(+). Its pathway is cofactor biosynthesis; 7,8-dihydroneopterin triphosphate biosynthesis; 7,8-dihydroneopterin triphosphate from GTP: step 1/1. Functionally, GTP cyclohydrolase 1 is the first enzyme in the biosynthetic pathway leading to folic acid. This Solanum lycopersicum (Tomato) protein is GTP cyclohydrolase 1 (GCH1).